The chain runs to 84 residues: MKVKIKCWNGVATWLWVANDENCGICRMAFNGCCPDCKVPGDDCPLVWGQCSHCFHMHCILKWLHAQQVQQHCPMCRQEWKFKE.

Zn(2+)-binding residues include cysteine 23, cysteine 26, cysteine 34, cysteine 37, cysteine 44, cysteine 51, histidine 53, histidine 56, histidine 58, cysteine 59, cysteine 73, and cysteine 76. The segment at cysteine 34–arginine 77 adopts an RING-type zinc-finger fold.

It belongs to the RING-box family. As to quaternary structure, the mammalian APC/C is composed at least of 14 distinct subunits ANAPC1, ANAPC2, CDC27/APC3, ANAPC4, ANAPC5, CDC16/APC6, ANAPC7, CDC23/APC8, ANAPC10, ANAPC11, CDC26/APC12, ANAPC13, ANAPC15 and ANAPC16 that assemble into a complex of at least 19 chains with a combined molecular mass of around 1.2 MDa; APC/C interacts with FZR1 and FBXO5. Interacts with the cullin domain of ANAPC2. Interacts with UBE2D2. In terms of processing, auto-ubiquitinated. In terms of tissue distribution, expressed at high levels in skeletal muscle and heart; in moderate levels in brain, kidney, and liver; and at low levels in colon, thymus, spleen, small intestine, placenta, lung and peripheral blood leukocyte.

Its subcellular location is the cytoplasm. The protein resides in the nucleus. It functions in the pathway protein modification; protein ubiquitination. Its function is as follows. Together with the cullin protein ANAPC2, constitutes the catalytic component of the anaphase promoting complex/cyclosome (APC/C), a cell cycle-regulated E3 ubiquitin ligase that controls progression through mitosis and the G1 phase of the cell cycle. The APC/C complex acts by mediating ubiquitination and subsequent degradation of target proteins: it mainly mediates the formation of 'Lys-11'-linked polyubiquitin chains and, to a lower extent, the formation of 'Lys-48'- and 'Lys-63'-linked polyubiquitin chains. The APC/C complex catalyzes assembly of branched 'Lys-11'-/'Lys-48'-linked branched ubiquitin chains on target proteins. May recruit the E2 ubiquitin-conjugating enzymes to the complex. This chain is Anaphase-promoting complex subunit 11 (ANAPC11), found in Homo sapiens (Human).